Reading from the N-terminus, the 332-residue chain is L-lactate dehydrogenase A chain (332 aa).

NAD(+) contacts are provided by residues 29–57 (GAVGMACAISILMKDLADELALVDVIEDK) and arginine 99. Positions 106, 138, and 169 each coordinate substrate. Residue asparagine 138 participates in NAD(+) binding. The Proton acceptor role is filled by histidine 193. A substrate-binding site is contributed by threonine 248.

Belongs to the LDH/MDH superfamily. LDH family. Homotetramer.

Its subcellular location is the cytoplasm. It carries out the reaction (S)-lactate + NAD(+) = pyruvate + NADH + H(+). Its pathway is fermentation; pyruvate fermentation to lactate; (S)-lactate from pyruvate: step 1/1. Functionally, interconverts simultaneously and stereospecifically pyruvate and lactate with concomitant interconversion of NADH and NAD(+). The chain is L-lactate dehydrogenase A chain (LDHA) from Pelodiscus sinensis japonicus (Chinese soft-shelled turtle).